Consider the following 207-residue polypeptide: Uridine kinase (207 aa).

Position 11–18 (11–18 (GGSGSGKT)) interacts with ATP.

This sequence belongs to the uridine kinase family.

It localises to the cytoplasm. The enzyme catalyses uridine + ATP = UMP + ADP + H(+). It catalyses the reaction cytidine + ATP = CMP + ADP + H(+). The protein operates within pyrimidine metabolism; CTP biosynthesis via salvage pathway; CTP from cytidine: step 1/3. Its pathway is pyrimidine metabolism; UMP biosynthesis via salvage pathway; UMP from uridine: step 1/1. This is Uridine kinase from Staphylococcus aureus (strain Mu3 / ATCC 700698).